Consider the following 747-residue polypeptide: Rho GTPase-activating protein 24 (747 aa).

Disordered regions lie at residues 1-20 and 327-475; these read MEER…KNTK and FPKD…GTHS. The region spanning 17 to 123 is the PH domain; sequence KNTKCGWLRK…WVKSIRRVIW (107 aa). The 195-residue stretch at 133–327 folds into the Rho-GAP domain; the sequence is QKLEDTVRYE…VMISKHDRLF (195 aa). Polar residues-rich tracts occupy residues 334–346 and 355–367; these read QSKP…SNNN and GQLQ…NTKE. Phosphoserine occurs at positions 368, 390, 395, 397, 401, 412, 414, and 436. Basic and acidic residues predominate over residues 368 to 380; the sequence is SPVRRCSWDKPES. Residues 381-404 are compositionally biased toward polar residues; the sequence is PQRSSVDNGSPTALSGSKTNSPRN. A compositionally biased stretch (polar residues) spans 431–475; sequence IVTNGSFSSSNAEGVEKPQTTPNGSLQARRTSSLKSSGTKMGTHS. The residue at position 451 (Thr-451) is a Phosphothreonine. Ser-494 is subject to Phosphoserine. The interval 581-639 is disordered; the sequence is DFYVGNFEDPVLDGPPQDDLSHPGDYENKSDRRSVGGRSSRATSSSDNSETFVGNTSSN. Positions 599–614 are enriched in basic and acidic residues; sequence DLSHPGDYENKSDRRS. The span at 616 to 629 shows a compositional bias: low complexity; the sequence is GGRSSRATSSSDNS. Residues 630–639 show a composition bias toward polar residues; sequence ETFVGNTSSN. Positions 648–728 form a coiled coil; sequence SSLKQEMTKQ…KEMEQFFSTF (81 aa).

As to quaternary structure, interacts with FLNA. In terms of processing, phosphorylated by ROCK, leading to activate the RacGAP activity.

It is found in the cytoplasm. Its subcellular location is the cytoskeleton. It localises to the cell junction. The protein resides in the adherens junction. The protein localises to the focal adhesion. It is found in the cell projection. Functionally, rho GTPase-activating protein involved in cell polarity, cell morphology and cytoskeletal organization. Acts as a GTPase activator for the Rac-type GTPase by converting it to an inactive GDP-bound state. Controls actin remodeling by inactivating Rac downstream of Rho leading to suppress leading edge protrusion and promotes cell retraction to achieve cellular polarity. Able to suppress RAC1 and CDC42 activity in vitro. Overexpression induces cell rounding with partial or complete disruption of actin stress fibers and formation of membrane ruffles, lamellipodia, and filopodia. Isoform 2 is a vascular cell-specific GAP involved in modulation of angiogenesis. The protein is Rho GTPase-activating protein 24 (Arhgap24) of Mus musculus (Mouse).